The sequence spans 351 residues: Epoxyqueuosine reductase (351 aa).

The active-site Proton donor is aspartate 131. The region spanning 177–205 (EDQPVDYGCGSCTRCVDFCPTKALLGDGR) is the 4Fe-4S ferredoxin-type domain. [4Fe-4S] cluster contacts are provided by cysteine 185, cysteine 188, cysteine 191, cysteine 195, cysteine 211, cysteine 237, cysteine 240, and cysteine 244.

It belongs to the QueG family. As to quaternary structure, monomer. The cofactor is cob(II)alamin. [4Fe-4S] cluster serves as cofactor.

The protein localises to the cytoplasm. The catalysed reaction is epoxyqueuosine(34) in tRNA + AH2 = queuosine(34) in tRNA + A + H2O. Its pathway is tRNA modification; tRNA-queuosine biosynthesis. Functionally, catalyzes the conversion of epoxyqueuosine (oQ) to queuosine (Q), which is a hypermodified base found in the wobble positions of tRNA(Asp), tRNA(Asn), tRNA(His) and tRNA(Tyr). The polypeptide is Epoxyqueuosine reductase (Lactococcus garvieae (strain Lg2) (Enterococcus seriolicida)).